A 617-amino-acid chain; its full sequence is Diacylglycerol O-acyltransferase 1 (617 aa).

Disordered regions lie at residues 1-52 (MEPI…ETER) and 95-186 (RNTN…PKQE). Residues 7 to 17 (SNGNKNNSMDK) show a composition bias toward polar residues. 2 stretches are compositionally biased toward low complexity: residues 18–34 (QPQQPQQPQQQQQQQQQ) and 96–105 (NTNNNNQNNT). Residues 106–140 (SPTFSSANGKQSNLTQRKINTQIQSKQPTNNNVQP) show a composition bias toward polar residues. The span at 160 to 177 (QNNNGNNNNNNNNNNNNN) shows a compositional bias: low complexity. The next 5 helical transmembrane spans lie at 217–237 (LLLILLITASFRLVILNHLLY), 254–274 (WPGVMISLMINLFIIAAYLIE), 306–326 (IIAFSPNPASGIIVMILICTF), 399–419 (IVEALSLSLLILWMVNQYMLP), and 449–469 (YVWLLGFYVFFHLYLNIVAEI). The FYXDWWN motif motif lies at 477–483 (FYRDWWN). The next 3 helical transmembrane spans lie at 520-540 (GYFMCFFVSAIFHELVISIPF), 545-565 (LWGFFGIMSQMVLIALTKNLM), and 570-590 (LGNVIFWISIVLGQPLVVLLY). The active site involves histidine 532.

It belongs to the membrane-bound acyltransferase family. Sterol o-acyltransferase subfamily.

Its subcellular location is the endoplasmic reticulum membrane. It carries out the reaction an acyl-CoA + a 1,2-diacyl-sn-glycerol = a triacyl-sn-glycerol + CoA. It catalyses the reaction all-trans-retinol + an acyl-CoA = an all-trans-retinyl ester + CoA. The catalysed reaction is 2-(9Z-octadecenoyl)-glycerol + (9Z)-octadecenoyl-CoA = 1,2-di-(9Z-octadecenoyl)-sn-glycerol + CoA. The enzyme catalyses 1,2-di-(9Z-octadecenoyl)-sn-glycerol + (9Z)-octadecenoyl-CoA = 1,2,3-tri-(9Z-octadecenoyl)-glycerol + CoA. It carries out the reaction all-trans-retinol + hexadecanoyl-CoA = all-trans-retinyl hexadecanoate + CoA. It catalyses the reaction 1-O-(9Z-octadecenyl)-glycerol + (9Z)-octadecenoyl-CoA = 1-O-(9Z-octadecyl)-3-(9Z-octadecenoyl)-glycerol + CoA. The catalysed reaction is 1-O-(9Z-octadecyl)-3-(9Z-octadecenoyl)-glycerol + (9Z)-octadecenoyl-CoA = 1-O-(9Z-octadecenyl)-2,3-di-(9Z-octadecenoyl)glycerol + CoA. The enzyme catalyses 1-(9Z-octadecenoyl)-glycerol + (9Z)-octadecenoyl-CoA = 1,2-di-(9Z-octadecenoyl)-glycerol + CoA. It carries out the reaction 1,2-di-(9Z-octadecenoyl)-glycerol + (9Z)-octadecenoate + H(+) = 1,2,3-tri-(9Z-octadecenoyl)-glycerol + H2O. It catalyses the reaction 1-octadecanoyl-2-(5Z,8Z,11Z,14Z-eicosatetraenoyl)-sn-glycerol + (9Z)-octadecenoyl-CoA = 1-octadecanoyl-2-(5Z,8Z,11Z,14Z)-eicosatetraenoyl-3-(9Z)-octadecenoyl-sn-glycerol + CoA. The catalysed reaction is hexadecane-1,2-diol + 2 hexadecanoyl-CoA = 1,2-O,O-dihexadecanoyl-1,2-hexadecanediol + 2 CoA. The enzyme catalyses hexadecane-1,2-diol + hexadecanoyl-CoA = 2-hydroxyhexadecyl hexadecanoate + CoA. It carries out the reaction 2-(9Z-octadecenoyl)-glycerol + hexadecanoyl-CoA = 1-hexadecanoyl-2-(9Z-octadecenoyl)-sn-glycerol + CoA. It catalyses the reaction 1,2-di-(9Z-octadecenoyl)-sn-glycerol + hexadecanoyl-CoA = 1,2-di-(9Z)-octadecenoyl-3-hexadecanoyl-sn-glycerol + CoA. The catalysed reaction is hexadecan-1-ol + hexadecanoyl-CoA = hexadecanyl hexadecanoate + CoA. The enzyme catalyses 13-cis-retinol + hexadecanoyl-CoA = 13-cis-retinyl hexadecanoate + CoA. It carries out the reaction 1,3-di-(9Z-octadecenoyl)-glycerol + (9Z)-octadecenoyl-CoA = 1,2,3-tri-(9Z-octadecenoyl)-glycerol + CoA. It catalyses the reaction 2,3-di-(9Z)-octadecenoyl-sn-glycerol + (9Z)-octadecenoyl-CoA = 1,2,3-tri-(9Z-octadecenoyl)-glycerol + CoA. The protein operates within lipid metabolism; glycerolipid metabolism. Catalyzes the terminal and only committed step in triacylglycerol synthesis by using diacylglycerol and fatty acyl CoA as substrates. The sequence is that of Diacylglycerol O-acyltransferase 1 (dgat1) from Dictyostelium discoideum (Social amoeba).